A 142-amino-acid polypeptide reads, in one-letter code: Large ribosomal subunit protein uL16 (142 aa).

This sequence belongs to the universal ribosomal protein uL16 family. As to quaternary structure, part of the 50S ribosomal subunit.

In terms of biological role, binds 23S rRNA and is also seen to make contacts with the A and possibly P site tRNAs. In Trichormus variabilis (strain ATCC 29413 / PCC 7937) (Anabaena variabilis), this protein is Large ribosomal subunit protein uL16.